We begin with the raw amino-acid sequence, 65 residues long: Small ribosomal subunit protein bS21B (65 aa).

The protein belongs to the bacterial ribosomal protein bS21 family.

This Geobacter sulfurreducens (strain ATCC 51573 / DSM 12127 / PCA) protein is Small ribosomal subunit protein bS21B.